The following is a 481-amino-acid chain: Phospho-2-dehydro-3-deoxyheptonate aldolase (481 aa).

The segment at 1–22 (MSQQTTPNAPGWAPDSWRSKPI) is disordered.

This sequence belongs to the class-II DAHP synthase family. In terms of assembly, homodimer. The N-terminus is blocked.

The catalysed reaction is D-erythrose 4-phosphate + phosphoenolpyruvate + H2O = 7-phospho-2-dehydro-3-deoxy-D-arabino-heptonate + phosphate. It functions in the pathway metabolic intermediate biosynthesis; chorismate biosynthesis; chorismate from D-erythrose 4-phosphate and phosphoenolpyruvate: step 1/7. The polypeptide is Phospho-2-dehydro-3-deoxyheptonate aldolase (aro-8) (Neurospora crassa (strain ATCC 24698 / 74-OR23-1A / CBS 708.71 / DSM 1257 / FGSC 987)).